The sequence spans 432 residues: MGKSVVILGAQWGDEGKGKIVDLLTDRVKYVVRYQGGHNAGHTLIINGEKTVLRLIPSGMLHPNVTCLIGNGVVVSPEALMKEMCELESRGIKVRERLLISEACPLILPYHVAMDHAREAALGKKAIGTTGRGIGPAYEDKVARRGLRVGDLFNKEAFAEKLKNILEYYNFQLVNYYKVEPVDYQKTLDDVMAIADVITGMVADITTILDTARKNGEHILFEGAQGTMLDIDHGTYPYVTSSNTTAGGVATGSGFGPRNLDYVLGIIKAYCTRVGGGPFTTELFDDVGAEIARKGNEFGAVTGRPRRCGWFDAVAIRRAIQLNSISGFCMTKLDVLDGFDEVKICVAYKMPNGEIVEYAPLAAKDWEGVEPIYETLPGWKENTFRITDVNKLPQNCINYIKRIEEVTGVPIDILSTGPDRVETMILRDPFAA.

Residues 13-19 (GDEGKGK) and 41-43 (GHT) each bind GTP. Aspartate 14 functions as the Proton acceptor in the catalytic mechanism. Mg(2+) is bound by residues aspartate 14 and glycine 41. IMP-binding positions include 14–17 (DEGK), 39–42 (NAGH), threonine 130, arginine 144, glutamine 225, threonine 240, and arginine 304. Histidine 42 functions as the Proton donor in the catalytic mechanism. 300-306 (AVTGRPR) is a substrate binding site. GTP-binding positions include arginine 306, 332–334 (KLD), and 415–417 (STG).

The protein belongs to the adenylosuccinate synthetase family. Homodimer. Mg(2+) serves as cofactor.

It is found in the cytoplasm. It carries out the reaction IMP + L-aspartate + GTP = N(6)-(1,2-dicarboxyethyl)-AMP + GDP + phosphate + 2 H(+). Its pathway is purine metabolism; AMP biosynthesis via de novo pathway; AMP from IMP: step 1/2. Plays an important role in the de novo pathway of purine nucleotide biosynthesis. Catalyzes the first committed step in the biosynthesis of AMP from IMP. This is Adenylosuccinate synthetase from Haemophilus influenzae (strain PittEE).